Reading from the N-terminus, the 342-residue chain is Autoinducer 2 import system permease protein LsrC (342 aa).

Topologically, residues 1-13 (MLKFIQNNREITA) are periplasmic. A helical transmembrane segment spans residues 14 to 34 (LLAVLLLFVLPGFLDRQYLSV). Over 35-38 (QTLT) the chain is Cytoplasmic. A helical transmembrane segment spans residues 39-59 (MVYSSAQILILLAMGATLVML). The Periplasmic portion of the chain corresponds to 60–69 (TRNIDVSVGS). The helical transmembrane segment at 70 to 90 (ITGMCAVLLGMLLNAGYSLPV) threads the bilayer. Over 91 to 92 (AC) the chain is Cytoplasmic. A helical transmembrane segment spans residues 93–113 (VATLLLGLLAGFFNGVLVAWL). A topological domain (periplasmic) is located at residue lysine 114. Residues 115 to 135 (IPAIVATLGTLGLYRGIMLLW) form a helical membrane-spanning segment. The Cytoplasmic segment spans residues 136-154 (TGGKWIEGLPAELKQLSAP). Residues 155 to 175 (LLLGVSAIGWLTIILVAFMAW) form a helical membrane-spanning segment. Topologically, residues 176-212 (LLAKTAFGRSFYATGDNLQGARQLGVRTEAIRIVAFS) are periplasmic. A helical transmembrane segment spans residues 213–233 (LNGCMAALAGIVFASQIGFIP). The Cytoplasmic portion of the chain corresponds to 234–251 (NQTGTGLEMKAIAACVLG). Residues 252–272 (GISLLGGSGAIIGAVLGAWFL) form a helical membrane-spanning segment. Topologically, residues 273–283 (TQIDSVLVLLR) are periplasmic. Residues 284–304 (IPAWWNDFIAGLVLLAVLVFD) form a helical membrane-spanning segment. Residues 305 to 342 (GRLRCALELNLRRQKYARFMTPPPSVKPASSGKKREAA) are Cytoplasmic-facing.

This sequence belongs to the binding-protein-dependent transport system permease family. AraH/RbsC subfamily. In terms of assembly, the complex is composed of two ATP-binding proteins (LsrA), two transmembrane proteins (LsrC and LsrD) and a solute-binding protein (LsrB).

Its subcellular location is the cell inner membrane. In terms of biological role, part of the ABC transporter complex LsrABCD involved in autoinducer 2 (AI-2) import. Probably responsible for the translocation of the substrate across the membrane. The chain is Autoinducer 2 import system permease protein LsrC (lsrC) from Escherichia coli O157:H7.